We begin with the raw amino-acid sequence, 113 residues long: Hydrogenase maturation factor HypA (113 aa).

Histidine 2 is a Ni(2+) binding site. 4 residues coordinate Zn(2+): cysteine 73, cysteine 76, cysteine 89, and cysteine 92.

Belongs to the HypA/HybF family.

Involved in the maturation of [NiFe] hydrogenases. Required for nickel insertion into the metal center of the hydrogenase. The polypeptide is Hydrogenase maturation factor HypA (Actinobacillus succinogenes (strain ATCC 55618 / DSM 22257 / CCUG 43843 / 130Z)).